A 179-amino-acid chain; its full sequence is ATP-dependent protease subunit HslV (179 aa).

Thr-9 is a catalytic residue. Na(+) is bound by residues Ala-164, Cys-167, and Thr-170.

It belongs to the peptidase T1B family. HslV subfamily. As to quaternary structure, a double ring-shaped homohexamer of HslV is capped on each side by a ring-shaped HslU homohexamer. The assembly of the HslU/HslV complex is dependent on binding of ATP.

Its subcellular location is the cytoplasm. The enzyme catalyses ATP-dependent cleavage of peptide bonds with broad specificity.. With respect to regulation, allosterically activated by HslU binding. In terms of biological role, protease subunit of a proteasome-like degradation complex believed to be a general protein degrading machinery. This Syntrophobacter fumaroxidans (strain DSM 10017 / MPOB) protein is ATP-dependent protease subunit HslV.